A 301-amino-acid chain; its full sequence is Glycine--tRNA ligase alpha subunit (301 aa).

It belongs to the class-II aminoacyl-tRNA synthetase family. As to quaternary structure, tetramer of two alpha and two beta subunits.

The protein resides in the cytoplasm. The catalysed reaction is tRNA(Gly) + glycine + ATP = glycyl-tRNA(Gly) + AMP + diphosphate. The chain is Glycine--tRNA ligase alpha subunit from Shewanella denitrificans (strain OS217 / ATCC BAA-1090 / DSM 15013).